The chain runs to 339 residues: Phenylalanine--tRNA ligase alpha subunit (339 aa).

Position 253 (E253) interacts with Mg(2+).

It belongs to the class-II aminoacyl-tRNA synthetase family. Phe-tRNA synthetase alpha subunit type 1 subfamily. As to quaternary structure, tetramer of two alpha and two beta subunits. The cofactor is Mg(2+).

It localises to the cytoplasm. The catalysed reaction is tRNA(Phe) + L-phenylalanine + ATP = L-phenylalanyl-tRNA(Phe) + AMP + diphosphate + H(+). This Alcanivorax borkumensis (strain ATCC 700651 / DSM 11573 / NCIMB 13689 / SK2) protein is Phenylalanine--tRNA ligase alpha subunit.